The chain runs to 278 residues: Protein D7 (278 aa).

CHHC U11-48K-type zinc fingers lie at residues 6–33 and 40–67; these read LMQC…RENN and LATC…EYRV. Zn(2+) contacts are provided by Cys9, His15, His25, Cys29, Cys43, His49, His59, and Cys63. Over residues 149–164 the composition is skewed to polar residues; the sequence is QVKQNQPEPEPFTSSE. 2 disordered regions span residues 149–230 and 249–278; these read QVKQ…PKAN and PGGS…WVRK. Basic and acidic residues predominate over residues 165–175; it reads RNYDPRSKEPP. Polar residues predominate over residues 188–200; the sequence is ATTNTNPWCRQTG. Residues 214 to 225 show a composition bias toward basic and acidic residues; the sequence is SSDEGPRNKEFP.

The protein belongs to the UPF0224 (FAM112) family.

It localises to the cytoplasm. Functionally, involved in oocyte maturation. It is possible that D7 is required at a certain point in the maturation process and that maturation cannot proceed beyond this point unless a threshold amount of D7 protein is provided. The chain is Protein D7 (d7) from Xenopus laevis (African clawed frog).